The primary structure comprises 164 residues: DNA-directed RNA polymerase 19 kDa subunit (164 aa).

A compositionally biased stretch (acidic residues) spans 1–35 (MADTDDIIDYESDDLTEYEDDEEEEEDGESLETSD). Residues 1–39 (MADTDDIIDYESDDLTEYEDDEEEEEDGESLETSDIDPK) are disordered.

It belongs to the poxviridae DNA-directed RNA polymerase 19 kDa subunit family. As to quaternary structure, the DNA-dependent RNA polymerase used for intermediate and late genes expression consists of eight subunits Rpo30/OPG66, Rpo7/OPG90, Rpo22/OPG103, Rpo147/OPG105, Rpo18/OPG119, Rpo19/OPG131, Rpo132/OPG151 and Rpo35/OPG156. The same holoenzyme, with the addition of the transcription-specificity factor OPG109, is used for early gene expression.

The protein resides in the virion. The enzyme catalyses RNA(n) + a ribonucleoside 5'-triphosphate = RNA(n+1) + diphosphate. Part of the DNA-dependent RNA polymerase which catalyzes the transcription of viral DNA into RNA using the four ribonucleoside triphosphates as substrates. Responsible for the transcription of early, intermediate and late genes. DNA-dependent RNA polymerase associates with the early transcription factor (ETF), itself composed of OPG118 and OPG133, thereby allowing the early genes transcription. Late transcription, and probably also intermediate transcription, require newly synthesized RNA polymerase. The polypeptide is DNA-directed RNA polymerase 19 kDa subunit (OPG131) (Homo sapiens (Human)).